The following is a 413-amino-acid chain: Lysosomal phospholipase A and acyltransferase (413 aa).

Positions 1–33 (MDRHLCICREIQLRSGLLFPFLLLMMLADLALP) are cleaved as a signal peptide. D46 serves as a coordination point for substrate. Residues C65 and C89 are joined by a disulfide bond. The N-linked (GlcNAc...) asparagine glycan is linked to N99. Residue S198 is the Acyl-ester intermediate of the active site. A Zn(2+)-binding site is contributed by S198. A substrate-binding site is contributed by M199. N273 and N289 each carry an N-linked (GlcNAc...) asparagine glycan. C355 contributes to the Zn(2+) binding site. Residues D360 and H392 each act as charge relay system in the active site. H392 lines the Zn(2+) pocket. N398 carries N-linked (GlcNAc...) asparagine glycosylation.

It belongs to the AB hydrolase superfamily. Lipase family. Post-translationally, N-glycosylated. N-glycosylation is important for maturation of the enzyme and normal subcellular location. Detected in alveolar macrophages (at protein level). Widely expressed. Expressed at highest levels in alveolar macrophages.

The protein localises to the lysosome. The protein resides in the secreted. Its subcellular location is the membrane. The enzyme catalyses a 1,2-diacyl-sn-glycero-3-phosphocholine + H2O = a 2-acyl-sn-glycero-3-phosphocholine + a fatty acid + H(+). The catalysed reaction is 1,2-dihexadecanoyl-sn-glycero-3-phosphocholine + H2O = 2-hexadecanoyl-sn-glycero-3-phosphocholine + hexadecanoate + H(+). It catalyses the reaction 1-hexadecanoyl-2-(9Z-octadecenoyl)-sn-glycero-3-phosphocholine + H2O = 2-(9Z-octadecenoyl)-sn-glycero-3-phosphocholine + hexadecanoate + H(+). It carries out the reaction 1,2-di-(9Z-octadecenoyl)-sn-glycero-3-phosphocholine + H2O = 2-(9Z-octadecenoyl)-sn-glycero-3-phosphocholine + (9Z)-octadecenoate + H(+). The enzyme catalyses 1-hexadecanoyl-2-glutaroyl-sn-glycero-3-phosphocholine + H2O = 2-glutaroyl-sn-glycero-3-phosphocholine + hexadecanoate + H(+). The catalysed reaction is 1-hexadecanoyl-2-nonadioyl-sn-glycero-3-phosphocholine + H2O = 2-nonadioyl-sn-glycero-3-phosphocholine + hexadecanoate + H(+). It catalyses the reaction 1-hexadecanoyl-2-(5-oxopentanoyl)-sn-glycero-3-phosphocholine + H2O = 2-(5-oxopentanoyl)-sn-glycero-3-phosphocholine + hexadecanoate + H(+). It carries out the reaction 1-hexadecanoyl-2-(9-oxononanoyl)-sn-glycero-3-phosphocholine + H2O = 2-(9-oxononanoyl)-sn-glycero-3-phosphocholine + hexadecanoate + H(+). The enzyme catalyses a 1,2-diacyl-sn-glycero-3-phosphocholine + H2O = a 1-acyl-sn-glycero-3-phosphocholine + a fatty acid + H(+). The catalysed reaction is 1,2-dihexadecanoyl-sn-glycero-3-phosphocholine + H2O = 1-hexadecanoyl-sn-glycero-3-phosphocholine + hexadecanoate + H(+). It catalyses the reaction 1-hexadecanoyl-2-(9Z-octadecenoyl)-sn-glycero-3-phosphocholine + H2O = 1-hexadecanoyl-sn-glycero-3-phosphocholine + (9Z)-octadecenoate + H(+). It carries out the reaction 1,2-di-(9Z-octadecenoyl)-sn-glycero-3-phosphocholine + H2O = 1-(9Z-octadecenoyl)-sn-glycero-3-phosphocholine + (9Z)-octadecenoate + H(+). The enzyme catalyses a 1-acyl-sn-glycero-3-phosphocholine + H2O = sn-glycerol 3-phosphocholine + a fatty acid + H(+). The catalysed reaction is 1-hexadecanoyl-sn-glycero-3-phosphocholine + H2O = sn-glycerol 3-phosphocholine + hexadecanoate + H(+). It catalyses the reaction N-(acetyl)-sphing-4-enine + a 1,2-diacyl-sn-glycero-3-phosphoethanolamine = 1-O-acyl-N-(acetyl)-sphing-4-enine + a 2-acyl-sn-glycero-3-phosphoethanolamine. It carries out the reaction 1-hexadecanoyl-2-(9Z-octadecenoyl)-sn-glycero-3-phosphoethanolamine + N-(acetyl)-sphing-4-enine = 2-(9Z-octadecenoyl)-sn-glycero-3-phosphoethanolamine + 1-hexadecanoyl-N-(acetyl)-sphing-4-enine. The enzyme catalyses 1-hexadecanoyl-2-(9Z,12Z-octadecadienoyl)-sn-glycero-3-phosphoethanolamine + N-(acetyl)-sphing-4-enine = 2-(9Z,12Z)-octadecadienoyl-sn-glycero-3-phosphoethanolamine + 1-hexadecanoyl-N-(acetyl)-sphing-4-enine. The catalysed reaction is 1-hexadecanoyl-2-(5Z,8Z,11Z,14Z-eicosatetraenoyl)-sn-glycero-3-phosphoethanolamine + N-(acetyl)-sphing-4-enine = 2-(5Z,8Z,11Z,14Z)-eicosatetraenoyl-sn-glycero-3-phosphoethanolamine + 1-hexadecanoyl-N-(acetyl)-sphing-4-enine. It catalyses the reaction N-(acetyl)-sphing-4-enine + a 1,2-diacyl-sn-glycero-3-phosphoethanolamine = 1-O-acyl-N-(acetyl)-sphing-4-enine + a 1-acyl-sn-glycero-3-phosphoethanolamine. It carries out the reaction 1-hexadecanoyl-2-(9Z-octadecenoyl)-sn-glycero-3-phosphoethanolamine + N-(acetyl)-sphing-4-enine = 1-(9Z-octadecenoyl)-N-(acetyl)-sphing-4-enine + 1-hexadecanoyl-sn-glycero-3-phosphoethanolamine. The enzyme catalyses 1-hexadecanoyl-2-(9Z,12Z-octadecadienoyl)-sn-glycero-3-phosphoethanolamine + N-(acetyl)-sphing-4-enine = 1-(9Z,12Z-octadecadienoyl)-N-acetylsphing-4-enine + 1-hexadecanoyl-sn-glycero-3-phosphoethanolamine. The catalysed reaction is 1-hexadecanoyl-2-(5Z,8Z,11Z,14Z-eicosatetraenoyl)-sn-glycero-3-phosphoethanolamine + N-(acetyl)-sphing-4-enine = 1-(5Z,8Z,11Z,14Z)-eicosatetraenoyl-N-(acetyl)-sphing-4-enine + 1-hexadecanoyl-sn-glycero-3-phosphoethanolamine. It catalyses the reaction N-(acetyl)-sphing-4-enine + a 1,2-diacyl-sn-glycero-3-phosphocholine = 1-O-acyl-N-(acetyl)-sphing-4-enine + a 2-acyl-sn-glycero-3-phosphocholine. It carries out the reaction 1-hexadecanoyl-2-(9Z-octadecenoyl)-sn-glycero-3-phosphocholine + N-(acetyl)-sphing-4-enine = 1-hexadecanoyl-N-(acetyl)-sphing-4-enine + 2-(9Z-octadecenoyl)-sn-glycero-3-phosphocholine. The enzyme catalyses 1-hexadecanoyl-2-(9Z,12Z-octadecadienoyl)-sn-glycero-3-phosphocholine + N-(acetyl)-sphing-4-enine = 2-(9Z,12Z-octadecadienoyl)-sn-glycero-3-phosphocholine + 1-hexadecanoyl-N-(acetyl)-sphing-4-enine. The catalysed reaction is 1-hexadecanoyl-2-(5Z,8Z,11Z,14Z-eicosatetraenoyl)-sn-glycero-3-phosphocholine + N-(acetyl)-sphing-4-enine = 1-hexadecanoyl-N-(acetyl)-sphing-4-enine + 2-(5Z,8Z,11Z,14Z)-eicosatetraenoyl-sn-glycero-3-phosphocholine. It catalyses the reaction 1-hexadecanoyl-2-(4Z,7Z,10Z,13Z,16Z,19Z-docosahexaenoyl)-sn-glycero-3-phosphocholine + N-(acetyl)-sphing-4-enine = 2-(4Z,7Z,10Z,13Z,16Z,19Z-docosahexaenoyl)-sn-glycero-3-phosphocholine + 1-hexadecanoyl-N-(acetyl)-sphing-4-enine. It carries out the reaction 1-hexadecanoyl-2-nonadioyl-sn-glycero-3-phosphocholine + N-(acetyl)-sphing-4-enine = 2-nonadioyl-sn-glycero-3-phosphocholine + 1-hexadecanoyl-N-(acetyl)-sphing-4-enine. The enzyme catalyses 1-octadecanoyl-2-(9Z-octadecenoyl)-sn-glycero-3-phosphocholine + N-(acetyl)-sphing-4-enine = 1-octadecanoyl-N-(acetyl)-sphing-4-enine + 2-(9Z-octadecenoyl)-sn-glycero-3-phosphocholine. The catalysed reaction is 1-(9Z)-octadecenoyl-2-octadecanoyl-sn-glycero-3-phosphocholine + N-(acetyl)-sphing-4-enine = 2-octadecanoyl-sn-glycero-3-phosphocholine + 1-(9Z-octadecenoyl)-N-(acetyl)-sphing-4-enine. It catalyses the reaction 1-octadecanoyl-2-(5Z,8Z,11Z,14Z-eicosatetraenoyl)-sn-glycero-3-phosphocholine + N-(acetyl)-sphing-4-enine = 1-octadecanoyl-N-(acetyl)-sphing-4-enine + 2-(5Z,8Z,11Z,14Z)-eicosatetraenoyl-sn-glycero-3-phosphocholine. It carries out the reaction 1-(9Z-octadecenoyl)-2-hexadecanoyl-sn-glycero-3-phosphocholine + N-(acetyl)-sphing-4-enine = 1-(9Z-octadecenoyl)-N-(acetyl)-sphing-4-enine + 2-hexadecanoyl-sn-glycero-3-phosphocholine. The enzyme catalyses N-(acetyl)-sphing-4-enine + a 1,2-diacyl-sn-glycero-3-phosphocholine = 1-O-acyl-N-(acetyl)-sphing-4-enine + a 1-acyl-sn-glycero-3-phosphocholine. The catalysed reaction is 1-hexadecanoyl-2-(9Z-octadecenoyl)-sn-glycero-3-phosphocholine + N-(acetyl)-sphing-4-enine = 1-(9Z-octadecenoyl)-N-(acetyl)-sphing-4-enine + 1-hexadecanoyl-sn-glycero-3-phosphocholine. It catalyses the reaction 1-hexadecanoyl-2-(9Z,12Z-octadecadienoyl)-sn-glycero-3-phosphocholine + N-(acetyl)-sphing-4-enine = 1-(9Z,12Z-octadecadienoyl)-N-acetylsphing-4-enine + 1-hexadecanoyl-sn-glycero-3-phosphocholine. It carries out the reaction 1-hexadecanoyl-2-(5Z,8Z,11Z,14Z-eicosatetraenoyl)-sn-glycero-3-phosphocholine + N-(acetyl)-sphing-4-enine = 1-(5Z,8Z,11Z,14Z)-eicosatetraenoyl-N-(acetyl)-sphing-4-enine + 1-hexadecanoyl-sn-glycero-3-phosphocholine. The enzyme catalyses 1-hexadecanoyl-2-(4Z,7Z,10Z,13Z,16Z,19Z-docosahexaenoyl)-sn-glycero-3-phosphocholine + N-(acetyl)-sphing-4-enine = 1-(4Z,7Z,10Z,13Z,16Z,19Z-docosahexaenoyl)-N-(acetyl)-sphing-4-enine + 1-hexadecanoyl-sn-glycero-3-phosphocholine. The catalysed reaction is 1-octadecanoyl-2-(9Z-octadecenoyl)-sn-glycero-3-phosphocholine + N-(acetyl)-sphing-4-enine = 1-(9Z-octadecenoyl)-N-(acetyl)-sphing-4-enine + 1-octadecanoyl-sn-glycero-3-phosphocholine. It catalyses the reaction 1-octadecanoyl-2-(9Z,12Z)-octadecadienoyl-sn-glycero-3-phosphocholine + N-(acetyl)-sphing-4-enine = 1-(9Z,12Z-octadecadienoyl)-N-acetylsphing-4-enine + 1-octadecanoyl-sn-glycero-3-phosphocholine. It carries out the reaction 1-(9Z-octadecenoyl)-2-hexadecanoyl-sn-glycero-3-phosphocholine + N-(acetyl)-sphing-4-enine = 1-hexadecanoyl-N-(acetyl)-sphing-4-enine + 1-(9Z-octadecenoyl)-sn-glycero-3-phosphocholine. The enzyme catalyses 1-(9Z)-octadecenoyl-2-octadecanoyl-sn-glycero-3-phosphocholine + N-(acetyl)-sphing-4-enine = 1-octadecanoyl-N-(acetyl)-sphing-4-enine + 1-(9Z-octadecenoyl)-sn-glycero-3-phosphocholine. The catalysed reaction is 1,2-di-(9Z-octadecenoyl)-sn-glycero-3-phosphocholine + N-(acetyl)-sphing-4-enine = 1-(9Z-octadecenoyl)-N-(acetyl)-sphing-4-enine + 1-(9Z-octadecenoyl)-sn-glycero-3-phosphocholine. It catalyses the reaction 1-octadecanoyl-2-(5Z,8Z,11Z,14Z-eicosatetraenoyl)-sn-glycero-3-phosphocholine + N-(acetyl)-sphing-4-enine = 1-(5Z,8Z,11Z,14Z)-eicosatetraenoyl-N-(acetyl)-sphing-4-enine + 1-octadecanoyl-sn-glycero-3-phosphocholine. It carries out the reaction a 1,2-diacyl-sn-glycero-3-phospho-L-serine + N-(acetyl)-sphing-4-enine = a 2-acyl-sn-glycero-3-phospho-L-serine + 1-O-acyl-N-(acetyl)-sphing-4-enine. The enzyme catalyses 1-octadecanoyl-2-(9Z-octadecenoyl)-sn-glycero-3-phospho-L-serine + N-(acetyl)-sphing-4-enine = 2-(9Z-octadecenoyl)-sn-glycero-3-phospho-L-serine + 1-octadecanoyl-N-(acetyl)-sphing-4-enine. The catalysed reaction is a 1,2-diacyl-sn-glycero-3-phospho-L-serine + N-(acetyl)-sphing-4-enine = 1-O-acyl-N-(acetyl)-sphing-4-enine + a 1-acyl-sn-glycero-3-phospho-L-serine. It catalyses the reaction 1-octadecanoyl-2-(9Z-octadecenoyl)-sn-glycero-3-phospho-L-serine + N-(acetyl)-sphing-4-enine = 1-octadecanoyl-sn-glycero-3-phosphoserine + 1-(9Z-octadecenoyl)-N-(acetyl)-sphing-4-enine. It carries out the reaction a 1,2-diacyl-sn-glycero-3-phospho-(1'-sn-glycerol) + N-(acetyl)-sphing-4-enine = 2-acyl-sn-glycero-3-phospho-(1'-sn-glycerol) + 1-O-acyl-N-(acetyl)-sphing-4-enine. The enzyme catalyses 1-octadecanoyl-2-(9Z-octadecenoyl)-sn-glycero-3-phospho-(1'-sn-glycerol) + N-(acetyl)-sphing-4-enine = 2-(9Z-octadecenoyl)-sn-glycero-3-phospho-(1'-sn-glycerol) + 1-octadecanoyl-N-(acetyl)-sphing-4-enine. The catalysed reaction is a 1,2-diacyl-sn-glycero-3-phospho-(1'-sn-glycerol) + N-(acetyl)-sphing-4-enine = 1-O-acyl-N-(acetyl)-sphing-4-enine + 1-acyl-sn-glycero-3-phospho-(1'-sn-glycerol). It catalyses the reaction 1-octadecanoyl-2-(9Z-octadecenoyl)-sn-glycero-3-phospho-(1'-sn-glycerol) + N-(acetyl)-sphing-4-enine = 1-octadecanoyl-sn-glycero-3-phospho-(1'-sn-glycerol) + 1-(9Z-octadecenoyl)-N-(acetyl)-sphing-4-enine. It carries out the reaction an N-acylethanolamine + a 1,2-diacyl-sn-glycero-3-phosphocholine = 2-(acylamino)ethyl fatty acid + a 2-acyl-sn-glycero-3-phosphocholine. The enzyme catalyses an N-acylethanolamine + a 1,2-diacyl-sn-glycero-3-phosphocholine = 2-(acylamino)ethyl fatty acid + a 1-acyl-sn-glycero-3-phosphocholine. The catalysed reaction is N-(5Z,8Z,11Z,14Z-eicosatetraenoyl)-ethanolamine + 1,2-di-(9Z-octadecenoyl)-sn-glycero-3-phosphocholine = 2-[(5Z,8Z,11Z,14Z)-eicosatetraenoylamino]ethyl (9Z)-octadecenoate + (9Z-octadecenoyl)-sn-glycero-3-phosphocholine. It catalyses the reaction N-(9Z-octadecenoyl) ethanolamine + 1,2-di-(9Z-octadecenoyl)-sn-glycero-3-phosphocholine = 2-[(9Z)-octadecenoylamino]ethyl (9Z)-octadecenoate + (9Z-octadecenoyl)-sn-glycero-3-phosphocholine. It carries out the reaction a 3-acyl-sn-glycerol + a 1,2-diacyl-sn-glycero-3-phosphocholine = a 1,3-diacylglycerol + a 1-acyl-sn-glycero-3-phosphocholine. The enzyme catalyses a 3-acyl-sn-glycerol + a 1,2-diacyl-sn-glycero-3-phosphocholine = a 1,3-diacylglycerol + a 2-acyl-sn-glycero-3-phosphocholine. The catalysed reaction is 3-(9Z-octadecenoyl)-sn-glycerol + 1,2-di-(9Z-octadecenoyl)-sn-glycero-3-phosphocholine = 1,3-di-(9Z-octadecenoyl)-glycerol + (9Z-octadecenoyl)-sn-glycero-3-phosphocholine. It catalyses the reaction 3-hexadecanoyl-sn-glycerol + 1,2-di-(9Z-octadecenoyl)-sn-glycero-3-phosphocholine = 1-(9Z)-octadecenoyl-3-hexadecanoyl-sn-glycerol + (9Z-octadecenoyl)-sn-glycero-3-phosphocholine. It carries out the reaction a 1-acyl-sn-glycerol + a 1,2-diacyl-sn-glycero-3-phosphocholine = a 1,3-diacylglycerol + a 2-acyl-sn-glycero-3-phosphocholine. The enzyme catalyses a 1-acyl-sn-glycerol + a 1,2-diacyl-sn-glycero-3-phosphocholine = a 1,3-diacylglycerol + a 1-acyl-sn-glycero-3-phosphocholine. The catalysed reaction is 1-(9Z-octadecenoyl)-sn-glycerol + 1,2-di-(9Z-octadecenoyl)-sn-glycero-3-phosphocholine = 1,3-di-(9Z-octadecenoyl)-glycerol + (9Z-octadecenoyl)-sn-glycero-3-phosphocholine. It catalyses the reaction 1-hexadecanoyl-sn-glycerol + 1,2-di-(9Z-octadecenoyl)-sn-glycero-3-phosphocholine = 1-hexadecanoyl-3-(9Z)-octadecenoyl-sn-glycerol + (9Z-octadecenoyl)-sn-glycero-3-phosphocholine. It carries out the reaction a 2-acylglycerol + a 1,2-diacyl-sn-glycero-3-phosphocholine = a 1,2-diacylglycerol + a 2-acyl-sn-glycero-3-phosphocholine. The enzyme catalyses a 2-acylglycerol + a 1,2-diacyl-sn-glycero-3-phosphocholine = a 1,2-diacylglycerol + a 1-acyl-sn-glycero-3-phosphocholine. The catalysed reaction is 2-hexadecanoylglycerol + 1,2-di-(9Z-octadecenoyl)-sn-glycero-3-phosphocholine = 1-(9Z)-octadecenoyl-2-hexadecanoylglycerol + (9Z-octadecenoyl)-sn-glycero-3-phosphocholine. It catalyses the reaction 1-O-alkylglycerol + a 1,2-diacyl-sn-glycero-3-phosphocholine = 1-O-alkyl-3-acylglycerol + a 1-acyl-sn-glycero-3-phosphocholine. It carries out the reaction 1-O-alkylglycerol + a 1,2-diacyl-sn-glycero-3-phosphocholine = 1-O-alkyl-3-acylglycerol + a 2-acyl-sn-glycero-3-phosphocholine. The enzyme catalyses 1-O-hexadecylglycerol + 1,2-di-(9Z-octadecenoyl)-sn-glycero-3-phosphocholine = 1-O-hexadecyl-3-(9Z)-octadecenoylglycerol + (9Z-octadecenoyl)-sn-glycero-3-phosphocholine. The catalysed reaction is 1-O-alkyl-2-acyl-sn-glycerol + a 1,2-diacyl-sn-glycero-3-phosphocholine = 1-O-alkyl-2,3-diacyl-sn-glycerol + a 2-acyl-sn-glycero-3-phosphocholine. It catalyses the reaction 1-O-alkyl-2-acyl-sn-glycerol + a 1,2-diacyl-sn-glycero-3-phosphocholine = 1-O-alkyl-2,3-diacyl-sn-glycerol + a 1-acyl-sn-glycero-3-phosphocholine. It carries out the reaction 1-O-hexadecyl-2-acetyl-sn-glycerol + 1,2-di-(9Z-octadecenoyl)-sn-glycero-3-phosphocholine = 1-O-hexadecyl-2-acetyl-3-(9Z)-octadecenoyl-sn-glycerol + (9Z-octadecenoyl)-sn-glycero-3-phosphocholine. The enzyme catalyses 1-O-hexadecyl-2-O-methyl-sn-glycerol + 1,2-di-(9Z-octadecenoyl)-sn-glycero-3-phosphocholine = 1-O-hexadecyl-2-O-methyl-3-(9Z)-octadecenoyl-sn-glycerol + (9Z-octadecenoyl)-sn-glycero-3-phosphocholine. The catalysed reaction is a 1,2-diacyl-sn-glycero-3-phosphoethanolamine + H2O = a 1-acyl-sn-glycero-3-phosphoethanolamine + a fatty acid + H(+). It catalyses the reaction 1-acyl-2-(5Z,8Z,11Z,14Z)-eicosatetraenoyl-sn-glycero-3-phosphoethanolamine + H2O = a 1-acyl-sn-glycero-3-phosphoethanolamine + (5Z,8Z,11Z,14Z)-eicosatetraenoate + H(+). It carries out the reaction a 1,2-diacyl-sn-glycero-3-phospho-(1'-sn-glycerol) + H2O = 1-acyl-sn-glycero-3-phospho-(1'-sn-glycerol) + a fatty acid + H(+). The enzyme catalyses 1-hexadecanoyl-2-(9Z-octadecenoyl)-sn-glycero-3-phospho-(1'-sn-glycerol) + H2O = 1-hexadecanoyl-sn-glycero-3-phospho-(1'-sn-glycerol) + (9Z)-octadecenoate + H(+). The catalysed reaction is a 1,2-diacyl-sn-glycero-3-phospho-(1'-sn-glycerol) + H2O = 2-acyl-sn-glycero-3-phospho-(1'-sn-glycerol) + a fatty acid + H(+). It catalyses the reaction 1-hexadecanoyl-2-(9Z-octadecenoyl)-sn-glycero-3-phospho-(1'-sn-glycerol) + H2O = 2-(9Z-octadecenoyl)-sn-glycero-3-phospho-(1'-sn-glycerol) + hexadecanoate + H(+). Transacylase activity is inhibited by MJ33. Its function is as follows. Has dual calcium-independent phospholipase and O-acyltransferase activities with a potential role in glycerophospholipid homeostasis and remodeling of acyl groups of lipophilic alcohols present in acidic cellular compartments. Catalyzes hydrolysis of the ester bond of the fatty acyl group attached at sn-1 or sn-2 position of phospholipids (phospholipase A1 or A2 activity) and transfer it to the hydroxyl group at the first carbon of lipophilic alcohols (O-acyltransferase activity). Among preferred fatty acyl donors are phosphatidylcholines, phosphatidylethanolamines, phosphatidylglycerols and phosphatidylserines. Favors sn-2 over sn-1 deacylation of unsaturated fatty acyl groups of phosphatidylcholines, phosphatidylethanolamines, and phosphatidylglycerols. Among preferred fatty acyl acceptors are natural lipophilic alcohols including short-chain ceramide N-acetyl-sphingosine (C2 ceramide), alkylacylglycerols, monoacylglycerols, and acylethanolamides such as anandamide and oleoylethanolamide. Selectively hydrolyzes the sn-1 fatty acyl group of truncated oxidized phospholipids and may play a role in detoxification of reactive oxidized phospholipids during oxidative stress. Required for normal phospholipid degradation in alveolar macrophages with potential implications in the clearance of pulmonary surfactant, which is mainly composed of dipalmitoylphosphatidylcholine (1,2-dihexadecanoyl-sn-glycero-3-phosphocholine). Involved in the first step of bis(monoacylglycero)phosphate (BMP) de novo synthesis from phosphatidylglycerol (1,2-diacyl-sn-glycero-3-phospho-(1'-sn-glycerol), PG). BMP is an important player in cargo sorting and degradation, regulation of cellular cholesterol levels and intercellular communication. At neutral pH, hydrolyzes the sn-1 fatty acyl group of the lysophosphatidylcholines. The polypeptide is Lysosomal phospholipase A and acyltransferase (Pla2g15) (Rattus norvegicus (Rat)).